We begin with the raw amino-acid sequence, 118 residues long: Telomere bouquet protein 2 (118 aa).

As to quaternary structure, interacts with bqt1. The bqt1-bqt2-sad1 complex binds rap1.

Its subcellular location is the cytoplasm. It is found in the nucleus. It localises to the cytoskeleton. The protein localises to the microtubule organizing center. The protein resides in the spindle pole body. Its subcellular location is the chromosome. It is found in the telomere. Functionally, involved in chromosome segregation. During meiotic prophase, connects telomeres to the spindle pole body by forming a bridge between the telomere protein rap1 and the spindle pole body protein sad1. This is Telomere bouquet protein 2 (bqt2) from Schizosaccharomyces pombe (strain 972 / ATCC 24843) (Fission yeast).